Reading from the N-terminus, the 642-residue chain is Influenza virus NS1A-binding protein (642 aa).

Residues Met-1–Val-131 enclose the BTB domain. The BACK domain maps to Thr-132 to Pro-350. Positions Ile-164–Gly-368 are sufficient for AHR interaction and signaling. Ser-246, Ser-277, Ser-322, Ser-336, and Ser-338 each carry phosphoserine. Residues Lys-257–Thr-281 form a disordered region. Polar residues predominate over residues Lys-265 to Thr-281. Kelch repeat units follow at residues Thr-384–Gly-421, Cys-432–Gly-469, Asn-481–Gly-518, Asn-527–Gly-565, Cys-575–Gly-612, and Thr-622–Phe-642.

The protein belongs to the BTB-kelch protein family. Homodimer; through the BTB domain. Interacts with AHR/Aryl hydrocarbon receptor. Interacts (via BACK domain) with pre-mRNA-binding protein HNRNPK; the interaction is direct. Interacts (via BACK domain) with splicing factor PTBP1; the interaction is direct. Interacts (via Kelch repeats) with RNA polymerase POLR2A (via C-terminal domain). Interacts (via BACK domain) with splicing factor SNRPA; the interaction is indirect. Interacts (via Kelch repeats) with splicing factor SART1. Interacts (via BACK domain) with ALYREF; the interaction is indirect and likely plays a role in mRNA nuclear export. Interacts (via Kelch repeats) with KLHL20 (via Kelch repeats); this interaction blocks the assembly of Cul3-KLHL20 complex. As to quaternary structure, (Microbial infection) Interacts (via BACK domain) with influenza A virus non-structural protein 1 (NS1); the interaction is direct and bridges the interaction between NS1 and HNRNPK.

Its subcellular location is the cytoplasm. It is found in the cytoskeleton. The protein localises to the nucleus. It localises to the nucleoplasm. In terms of biological role, involved in many cell functions, including pre-mRNA splicing, the aryl hydrocarbon receptor (AHR) pathway, F-actin organization and protein ubiquitination. Plays a role in the dynamic organization of the actin skeleton as a stabilizer of actin filaments by association with F-actin through Kelch repeats. Protects cells from cell death induced by actin destabilization. Functions as modifier of the AHR/Aryl hydrocarbon receptor pathway increasing the concentration of AHR available to activate transcription. In addition, functions as a negative regulator of BCR(KLHL20) E3 ubiquitin ligase complex to prevent ubiquitin-mediated proteolysis of PML and DAPK1, two tumor suppressors. Inhibits pre-mRNA splicing (in vitro). May play a role in mRNA nuclear export. Functionally, (Microbial infection) Involved in the alternative splicing of influenza A virus M1 mRNA through interaction with HNRNPK, thereby facilitating the generation of viral M2 protein. The BTB and Kelch domains are required for splicing activity. Promotes export of viral M mRNA and RNP via its interaction with mRNA export factor ALYREF. The chain is Influenza virus NS1A-binding protein from Homo sapiens (Human).